We begin with the raw amino-acid sequence, 111 residues long: Small ribosomal subunit protein bS16 (111 aa).

Belongs to the bacterial ribosomal protein bS16 family.

The polypeptide is Small ribosomal subunit protein bS16 (Rickettsia africae (strain ESF-5)).